The sequence spans 134 residues: Small ribosomal subunit protein uS11 (134 aa).

The disordered stretch occupies residues 115-134 (TPIPHNGTRPPKKVLKRDLK). The segment covering 124–134 (PPKKVLKRDLK) has biased composition (basic residues).

It belongs to the universal ribosomal protein uS11 family. As to quaternary structure, part of the 30S ribosomal subunit. Interacts with proteins S7 and S18. Binds to IF-3.

Functionally, located on the platform of the 30S subunit, it bridges several disparate RNA helices of the 16S rRNA. Forms part of the Shine-Dalgarno cleft in the 70S ribosome. In Mycoplasma mobile (strain ATCC 43663 / 163K / NCTC 11711) (Mesomycoplasma mobile), this protein is Small ribosomal subunit protein uS11.